The following is a 397-amino-acid chain: Phosphoglycerate kinase (397 aa).

Residues 21-23 (DFN), R37, 60-63 (HLGR), R119, and R152 each bind substrate. Residues K203, G294, E325, and 354-357 (GGDS) each bind ATP.

The protein belongs to the phosphoglycerate kinase family. As to quaternary structure, monomer.

It is found in the cytoplasm. It catalyses the reaction (2R)-3-phosphoglycerate + ATP = (2R)-3-phospho-glyceroyl phosphate + ADP. It functions in the pathway carbohydrate degradation; glycolysis; pyruvate from D-glyceraldehyde 3-phosphate: step 2/5. This Chlorobium chlorochromatii (strain CaD3) protein is Phosphoglycerate kinase.